Here is a 438-residue protein sequence, read N- to C-terminus: DNA primase DnaG (438 aa).

The region spanning 171 to 245 is the Toprim domain; that stretch reads DAILVVEGRA…DIDYVARAPE (75 aa). Residues Glu177, Asp219, and Asp221 each contribute to the Mg(2+) site.

This sequence belongs to the archaeal DnaG primase family. As to quaternary structure, forms a ternary complex with MCM helicase and DNA. Component of the archaeal exosome complex. Mg(2+) is required as a cofactor.

The enzyme catalyses ssDNA + n NTP = ssDNA/pppN(pN)n-1 hybrid + (n-1) diphosphate.. RNA polymerase that catalyzes the synthesis of short RNA molecules used as primers for DNA polymerase during DNA replication. Also part of the exosome, which is a complex involved in RNA degradation. Acts as a poly(A)-binding protein that enhances the interaction between heteromeric, adenine-rich transcripts and the exosome. The protein is DNA primase DnaG of Methanothrix thermoacetophila (strain DSM 6194 / JCM 14653 / NBRC 101360 / PT) (Methanosaeta thermophila).